Reading from the N-terminus, the 202-residue chain is Matrix protein (202 aa).

The disordered stretch occupies residues 9 to 31 (KNRRDEDTQKSSPASAPLDDDDL). The PPXY motif motif lies at 35–38 (PPEY). Positions 115 to 151 (KLRRTFIFQWADSRGPLEGEELEYSQEITWDDDTEFV) are essential for glycoprotein binding.

Belongs to the lyssavirus matrix protein family. As to quaternary structure, homomultimer. Interacts with nucleoprotein and with the cytoplasmic domain of glycoprotein. Interacts with host ATP6V1A; this interaction plays an important role in virion uncoating after viral entry.

It localises to the virion membrane. The protein localises to the host endomembrane system. It is found in the host cytoplasm. Its function is as follows. Plays a major role in assembly, budding and uncoating of virion after membrane fusion. Completely covers the ribonucleoprotein coil and keep it in condensed bullet-shaped form. Inhibits viral transcription and stimulates replication. Plays a major role in early induction of TRAIL-mediated apoptosis in infected neurons. Inhibits the integrated stress response (ISR) in the infected cell by blocking the formation of stress granules. This chain is Matrix protein (M), found in Rabies virus (strain SAD B19) (RABV).